The chain runs to 514 residues: GTPase-activating protein gyp1 (514 aa).

Disordered regions lie at residues 17 to 65 (LWNG…QPPK) and 130 to 164 (LPRM…LHSS). 2 stretches are compositionally biased toward polar residues: residues 18–28 (WNGSSSATSDP) and 135–158 (RSTT…TTSR). One can recognise a Rab-GAP TBC domain in the interval 216–443 (GIPSEHRPIV…RMWDTYMAEG (228 aa)).

It localises to the golgi apparatus. It is found in the golgi stack. The protein localises to the cytoplasm. The protein resides in the nucleus. Stimulates specifically the GTPase activity of ypt1. Functions on the Golgi as a negative regulator of ypt1. This is GTPase-activating protein gyp1 from Schizosaccharomyces pombe (strain 972 / ATCC 24843) (Fission yeast).